The sequence spans 85 residues: Probable small nuclear ribonucleoprotein G (85 aa).

In terms of domain architecture, Sm spans Gln-6–Met-78.

This sequence belongs to the snRNP Sm proteins family. As to quaternary structure, core component of the spliceosomal U1, U2, U4 and U5 small nuclear ribonucleoproteins (snRNPs), the building blocks of the spliceosome. Most spliceosomal snRNPs contain a common set of Sm proteins, SNRPB, SNRPD1, SNRPD2, SNRPD3, SNRPE, SNRPF and SNRPG that assemble in a heptameric protein ring on the Sm site of the small nuclear RNA to form the core snRNP. Component of the U1 snRNP. Component of the U4/U6-U5 tri-snRNP complex. Component of the U7 snRNP complex. Component of the U11/U12 snRNPs that are part of the U12-type spliceosome.

It is found in the cytoplasm. It localises to the cytosol. Its subcellular location is the nucleus. In terms of biological role, plays a role in pre-mRNA splicing as a core component of the spliceosomal U1, U2, U4 and U5 small nuclear ribonucleoproteins (snRNPs), the building blocks of the spliceosome. Component of both the pre-catalytic spliceosome B complex and activated spliceosome C complexes. Is also a component of the minor U12 spliceosome. This chain is Probable small nuclear ribonucleoprotein G (snrpG), found in Dictyostelium discoideum (Social amoeba).